Here is a 159-residue protein sequence, read N- to C-terminus: 2-C-methyl-D-erythritol 2,4-cyclodiphosphate synthase (159 aa).

A divalent metal cation contacts are provided by Asp-8 and His-10. 4-CDP-2-C-methyl-D-erythritol 2-phosphate is bound by residues 8 to 10 and 34 to 35; these read DVH and HS. His-42 contacts a divalent metal cation. Residues 56–58, 61–65, 132–135, Phe-139, and Arg-142 contribute to the 4-CDP-2-C-methyl-D-erythritol 2-phosphate site; these read DIG, FPDTD, and TTTE.

Belongs to the IspF family. Homotrimer. It depends on a divalent metal cation as a cofactor.

The catalysed reaction is 4-CDP-2-C-methyl-D-erythritol 2-phosphate = 2-C-methyl-D-erythritol 2,4-cyclic diphosphate + CMP. The protein operates within isoprenoid biosynthesis; isopentenyl diphosphate biosynthesis via DXP pathway; isopentenyl diphosphate from 1-deoxy-D-xylulose 5-phosphate: step 4/6. In terms of biological role, involved in the biosynthesis of isopentenyl diphosphate (IPP) and dimethylallyl diphosphate (DMAPP), two major building blocks of isoprenoid compounds. Catalyzes the conversion of 4-diphosphocytidyl-2-C-methyl-D-erythritol 2-phosphate (CDP-ME2P) to 2-C-methyl-D-erythritol 2,4-cyclodiphosphate (ME-CPP) with a corresponding release of cytidine 5-monophosphate (CMP). This Syntrophobacter fumaroxidans (strain DSM 10017 / MPOB) protein is 2-C-methyl-D-erythritol 2,4-cyclodiphosphate synthase.